The primary structure comprises 126 residues: Aspartate 1-decarboxylase (126 aa).

Ser-25 acts as the Schiff-base intermediate with substrate; via pyruvic acid in catalysis. Ser-25 carries the pyruvic acid (Ser) modification. Substrate is bound at residue Thr-57. Tyr-58 acts as the Proton donor in catalysis. 73-75 contacts substrate; the sequence is GAA.

Belongs to the PanD family. As to quaternary structure, heterooctamer of four alpha and four beta subunits. Pyruvate serves as cofactor. In terms of processing, is synthesized initially as an inactive proenzyme, which is activated by self-cleavage at a specific serine bond to produce a beta-subunit with a hydroxyl group at its C-terminus and an alpha-subunit with a pyruvoyl group at its N-terminus.

The protein localises to the cytoplasm. The enzyme catalyses L-aspartate + H(+) = beta-alanine + CO2. It functions in the pathway cofactor biosynthesis; (R)-pantothenate biosynthesis; beta-alanine from L-aspartate: step 1/1. Its function is as follows. Catalyzes the pyruvoyl-dependent decarboxylation of aspartate to produce beta-alanine. The polypeptide is Aspartate 1-decarboxylase (Cronobacter sakazakii (strain ATCC BAA-894) (Enterobacter sakazakii)).